The following is a 492-amino-acid chain: Nuclear autoantigenic sperm protein homolog (492 aa).

Low complexity predominate over residues 1-14; the sequence is MSAEAEAIVTTATA. 2 disordered regions span residues 1–52 and 123–254; these read MSAE…EQER and DVPD…EEGV. Phosphothreonine occurs at positions 32 and 33. Positions 124 to 145 are enriched in acidic residues; that stretch reads VPDEAADDDDEDVDDDEEESAE. Basic and acidic residues-rich tracts occupy residues 147–159 and 170–179; these read GAAK…DTKE and KELDTIKEGS. Residues S179 and S184 each carry the phosphoserine modification. T185 is modified (phosphothreonine). Position 193 is a phosphoserine (S193). Positions 226 to 238 are enriched in polar residues; the sequence is STSNGEVTASCSN. Acidic residues predominate over residues 244-253; that stretch reads VEEEPEEEEG. TPR repeat units lie at residues 284-317 and 326-359; these read AEVQ…HGEL and AELH…IEEE. Residues 377–400 adopt a coiled-coil conformation; that stretch reads MLDLEETKQEILAKIQEIEEMQAQ. Residues 418–459 are compositionally biased toward low complexity; it reads SGDAAAASSSSSSSANGAASSSSSSSKGAAAASSSTISSSSA. The interval 418–492 is disordered; sequence SGDAAAASSS…LCSPAKRAAV (75 aa). Phosphoserine is present on residues S478 and S485.

This sequence belongs to the NASP family. Interacts with the histone H3-H4 heterodimer; the interaction with H4 is probably indirect and mediated by H3 (His3, His3.3A and His3.3B). Interacts with His2Av; this interaction directly or indirectly destabilizes His2Av.

The protein resides in the cytoplasm. The protein localises to the nucleus. Its subcellular location is the perinuclear region. In terms of biological role, component of the histone chaperone network. Binds and stabilizes histone H3-H4 not bound to chromatin to maintain a soluble reservoir and modulate degradation by chaperone-mediated autophagy. May also bind and stabilize monomeric H3. Maternal effect gene essential for early embryogenesis. The polypeptide is Nuclear autoantigenic sperm protein homolog (Drosophila melanogaster (Fruit fly)).